A 463-amino-acid polypeptide reads, in one-letter code: L-seryl-tRNA(Sec) selenium transferase (463 aa).

Position 295 is an N6-(pyridoxal phosphate)lysine (K295).

This sequence belongs to the SelA family. As to quaternary structure, homodecamer; pentamer of dimers. Binds only one seryl-tRNA(Sec) per dimer. Pyridoxal 5'-phosphate is required as a cofactor.

The protein resides in the cytoplasm. It carries out the reaction L-seryl-tRNA(Sec) + selenophosphate + H(+) = L-selenocysteinyl-tRNA(Sec) + phosphate. The protein operates within aminoacyl-tRNA biosynthesis; selenocysteinyl-tRNA(Sec) biosynthesis; selenocysteinyl-tRNA(Sec) from L-seryl-tRNA(Sec) (bacterial route): step 1/1. In terms of biological role, converts seryl-tRNA(Sec) to selenocysteinyl-tRNA(Sec) required for selenoprotein biosynthesis. This is L-seryl-tRNA(Sec) selenium transferase from Escherichia coli (strain K12 / MC4100 / BW2952).